The following is a 154-amino-acid chain: 6,7-dimethyl-8-ribityllumazine synthase (154 aa).

Residues F23, 57–59 (AFE), and 81–83 (AVI) each bind 5-amino-6-(D-ribitylamino)uracil. Residue 86–87 (ST) coordinates (2S)-2-hydroxy-3-oxobutyl phosphate. Catalysis depends on H89, which acts as the Proton donor. A 5-amino-6-(D-ribitylamino)uracil-binding site is contributed by F114. R128 lines the (2S)-2-hydroxy-3-oxobutyl phosphate pocket.

It belongs to the DMRL synthase family.

It carries out the reaction (2S)-2-hydroxy-3-oxobutyl phosphate + 5-amino-6-(D-ribitylamino)uracil = 6,7-dimethyl-8-(1-D-ribityl)lumazine + phosphate + 2 H2O + H(+). It participates in cofactor biosynthesis; riboflavin biosynthesis; riboflavin from 2-hydroxy-3-oxobutyl phosphate and 5-amino-6-(D-ribitylamino)uracil: step 1/2. Functionally, catalyzes the formation of 6,7-dimethyl-8-ribityllumazine by condensation of 5-amino-6-(D-ribitylamino)uracil with 3,4-dihydroxy-2-butanone 4-phosphate. This is the penultimate step in the biosynthesis of riboflavin. The chain is 6,7-dimethyl-8-ribityllumazine synthase from Campylobacter jejuni subsp. jejuni serotype O:2 (strain ATCC 700819 / NCTC 11168).